Here is a 66-residue protein sequence, read N- to C-terminus: MLYPSIDLLMQKVDSKYKLVTVVAKRARELQDGAELMVKKPVSKKFVGQALEEIAGDKVELVEEEK.

This sequence belongs to the RNA polymerase subunit omega family. In terms of assembly, the RNAP catalytic core consists of 2 alpha, 1 beta, 1 beta' and 1 omega subunit. When a sigma factor is associated with the core the holoenzyme is formed, which can initiate transcription.

The enzyme catalyses RNA(n) + a ribonucleoside 5'-triphosphate = RNA(n+1) + diphosphate. Promotes RNA polymerase assembly. Latches the N- and C-terminal regions of the beta' subunit thereby facilitating its interaction with the beta and alpha subunits. This Geobacillus kaustophilus (strain HTA426) protein is DNA-directed RNA polymerase subunit omega.